We begin with the raw amino-acid sequence, 350 residues long: Biotin synthase (350 aa).

The 225-residue stretch at 38-262 folds into the Radical SAM core domain; it reads RQVQVSTLLS…MMPTSYVRLS (225 aa). Residues Cys-53, Cys-57, and Cys-60 each coordinate [4Fe-4S] cluster. Residues Cys-97, Cys-128, Cys-188, and Arg-260 each contribute to the [2Fe-2S] cluster site.

Belongs to the radical SAM superfamily. Biotin synthase family. Homodimer. [4Fe-4S] cluster serves as cofactor. The cofactor is [2Fe-2S] cluster.

It carries out the reaction (4R,5S)-dethiobiotin + (sulfur carrier)-SH + 2 reduced [2Fe-2S]-[ferredoxin] + 2 S-adenosyl-L-methionine = (sulfur carrier)-H + biotin + 2 5'-deoxyadenosine + 2 L-methionine + 2 oxidized [2Fe-2S]-[ferredoxin]. Its pathway is cofactor biosynthesis; biotin biosynthesis; biotin from 7,8-diaminononanoate: step 2/2. In terms of biological role, catalyzes the conversion of dethiobiotin (DTB) to biotin by the insertion of a sulfur atom into dethiobiotin via a radical-based mechanism. This chain is Biotin synthase, found in Yersinia enterocolitica serotype O:8 / biotype 1B (strain NCTC 13174 / 8081).